The chain runs to 715 residues: Lanosterol synthase erg7B (715 aa).

The PFTB 1 repeat unit spans residues 111–153; the sequence is AIEIKNYLMARANPVDGGWGLHSEGDSSVFGTSLNYTVLRLLG. Residue D445 is the Proton donor of the active site. PFTB repeat units follow at residues 550–590 and 599–640; these read IQRG…RSAG and VRRG…VVQT.

This sequence belongs to the terpene cyclase/mutase family.

The protein localises to the lipid droplet. Its subcellular location is the endoplasmic reticulum membrane. The catalysed reaction is (S)-2,3-epoxysqualene = lanosterol. The protein operates within steroid metabolism; ergosterol biosynthesis. Its function is as follows. Lanosterol synthase; part of the third module of ergosterol biosynthesis pathway that includes the late steps of the pathway. ERG7A and ERG7B catalyze the cyclization of (S)-2,3 oxidosqualene to lanosterol, a reaction that forms the sterol core. The third module or late pathway involves the ergosterol synthesis itself through consecutive reactions that mainly occur in the endoplasmic reticulum (ER) membrane. Firstly, the squalene synthase erg9 catalyzes the condensation of 2 farnesyl pyrophosphate moieties to form squalene, which is the precursor of all steroids. Squalene synthase is crucial for balancing the incorporation of farnesyl diphosphate (FPP) into sterol and nonsterol isoprene synthesis. Secondly, squalene is converted into lanosterol by the consecutive action of the squalene epoxidase erg1 and the lanosterol synthase erg7. Then, the delta(24)-sterol C-methyltransferase erg6 methylates lanosterol at C-24 to produce eburicol. Eburicol is the substrate of the sterol 14-alpha demethylase encoded by cyp51A and cyp51B, to yield 4,4,24-trimethyl ergosta-8,14,24(28)-trienol. The C-14 reductase erg24 then reduces the C14=C15 double bond which leads to 4,4-dimethylfecosterol. A sequence of further demethylations at C-4, involving the C-4 demethylation complex containing the C-4 methylsterol oxidases erg25A or erg25B, the sterol-4-alpha-carboxylate 3-dehydrogenase erg26 and the 3-keto-steroid reductase erg27, leads to the production of fecosterol via 4-methylfecosterol. The C-8 sterol isomerase erg2 then catalyzes the reaction which results in unsaturation at C-7 in the B ring of sterols and thus converts fecosterol to episterol. The sterol-C5-desaturase erg3B then catalyzes the introduction of a C-5 double bond in the B ring to produce 5-dehydroepisterol. The 2 other sterol-C5-desaturases, erg3A and erg3C, seem to be less important in ergosterol biosynthesis. The C-22 sterol desaturase erg5 further converts 5-dehydroepisterol into ergosta-5,7,22,24(28)-tetraen-3beta-ol by forming the C-22(23) double bond in the sterol side chain. Finally, ergosta-5,7,22,24(28)-tetraen-3beta-ol is substrate of the C-24(28) sterol reductases erg4A and erg4B to produce ergosterol. Possible alternative sterol biosynthetic pathways might exist from fecosterol to ergosterol, depending on the activities of the erg3 isoforms. The protein is Lanosterol synthase erg7B of Aspergillus fumigatus (strain ATCC MYA-4609 / CBS 101355 / FGSC A1100 / Af293) (Neosartorya fumigata).